The sequence spans 901 residues: Sperm-associated antigen 1 (901 aa).

TPR repeat units follow at residues 213–246, 247–279, and 280–313; these read ANRE…LPTA, IAYN…DPGN, and VKAL…EPDN. The segment at 322–437 is disordered; the sequence is EVERDLKNSE…DNPSGLKRRG (116 aa). Residues Ser-351 and Ser-359 each carry the phosphoserine modification. TPR repeat units lie at residues 430–464, 472–505, 507–539, 606–639, and 640–673; these read PSGL…EPTG, SILY…HPFS, KPLL…DCGI, FQAL…NSKA, and CAIY…DGEN. The segment at 694 to 776 is disordered; the sequence is GVDPSQVLLS…AEPAEKLDVS (83 aa). Residue Ser-703 is modified to Phosphoserine. Positions 708-717 are enriched in basic and acidic residues; that stretch reads EAARHLDTKN. 2 positions are modified to phosphoserine: Ser-739 and Ser-740. Residue 756 to 763 coordinates GTP; the sequence is PARDGVED. Ser-766 is modified (phosphoserine).

Detected in cerebellum, tongue, esophagus, forestomach, sperm and testis.

It is found in the cytoplasm. It localises to the dynein axonemal particle. Functionally, may play a role in the cytoplasmic assembly of the ciliary dynein arms. May play a role in fertilization. Binds GTP and has GTPase activity. This is Sperm-associated antigen 1 (Spag1) from Mus musculus (Mouse).